A 2343-amino-acid polypeptide reads, in one-letter code: Coagulation factor VIII (2343 aa).

The signal sequence occupies residues 1-19 (MQVELYTCCFLCLLPFSLS). Plastocyanin-like domains follow at residues 20–199 (ATRK…LLVC) and 207–343 (ERTQ…VDSC). Residues 20–343 (ATRKYYLGAV…MEAYVKVDSC (324 aa)) enclose the F5/8 type A 1 domain. N-linked (GlcNAc...) asparagine glycosylation is found at asparagine 233 and asparagine 253. Tyrosine 359 and tyrosine 408 each carry sulfotyrosine. 2 Plastocyanin-like domains span residues 393-567 (KTWV…LLIC) and 577-724 (NQMM…VSSC). The region spanning 393–724 (KTWVHYIAAE…MTALLKVSSC (332 aa)) is the F5/8 type A 2 domain. Asparagine 595 is a glycosylation site (N-linked (GlcNAc...) asparagine). A sulfotyrosine mark is found at tyrosine 731, tyrosine 732, and tyrosine 736. Residues 752-761 (PRSFSQNSRH) are compositionally biased toward polar residues. Disordered regions lie at residues 752–774 (PRSF…ATTT) and 828–865 (ADDH…PEPE). The tract at residues 754–1659 (SFSQNSRHPS…NPPVSKHHQR (906 aa)) is b. 2 stretches are compositionally biased toward basic and acidic residues: residues 828–841 (ADDH…RNKG) and 850–861 (PELRHSEDREFT). Asparagine 877, asparagine 921, asparagine 937, asparagine 938, asparagine 956, asparagine 1007, asparagine 1019, asparagine 1037, asparagine 1062, asparagine 1069, and asparagine 1080 each carry an N-linked (GlcNAc...) asparagine glycan. The disordered stretch occupies residues 1124–1147 (GKNSLSSEQRPSPKQLTSLGSEKS). A compositionally biased stretch (polar residues) spans 1125–1147 (KNSLSSEQRPSPKQLTSLGSEKS). Asparagine 1179, asparagine 1193, asparagine 1275, asparagine 1290, asparagine 1308, asparagine 1341, asparagine 1391, asparagine 1419, asparagine 1429, asparagine 1453, asparagine 1547, and asparagine 1618 each carry an N-linked (GlcNAc...) asparagine glycan. Residues 1302 to 1314 (TTRMSSNASQHVI) are compositionally biased toward polar residues. Residues 1302-1326 (TTRMSSNASQHVITQRGKRSLKQPR) are disordered. The disordered stretch occupies residues 1592-1632 (KSQKKSQTNTAFKRKDTILPLGPCENNDSTAAINEGQDKPQ). Tyrosine 1675 and tyrosine 1691 each carry sulfotyrosine. Plastocyanin-like domains follow at residues 1705–1869 (KTRH…LLIC) and 1879–2032 (GRQV…SKKC). The region spanning 1705–2032 (KTRHYFIAAV…TLFLVYSKKC (328 aa)) is the F5/8 type A 3 domain. The N-linked (GlcNAc...) asparagine glycan is linked to asparagine 1821. 2 consecutive F5/8 type C domains span residues 2032–2180 (CQTP…LLGC) and 2185–2337 (CSMP…VLGC). Disulfide bonds link cysteine 2032–cysteine 2180 and cysteine 2185–cysteine 2337. 2 N-linked (GlcNAc...) asparagine glycosylation sites follow: asparagine 2129 and asparagine 2281.

This sequence belongs to the multicopper oxidase family. As to quaternary structure, interacts with vWF. vWF binding is essential for the stabilization of F8 in circulation. Post-translationally, proteolytically cleaved by cathepsin CTSG to produce a partially activated form.

Its subcellular location is the secreted. The protein localises to the extracellular space. Its function is as follows. Factor VIII, along with calcium and phospholipid, acts as a cofactor for factor IXa when it converts factor X to the activated form, factor Xa. The chain is Coagulation factor VIII (F8) from Canis lupus familiaris (Dog).